The chain runs to 204 residues: FMN-dependent NADH:quinone oxidoreductase 1 (204 aa).

FMN-binding positions include Ser-14, 20 to 22 (SMS), and 99 to 102 (MYNF).

This sequence belongs to the azoreductase type 1 family. In terms of assembly, homodimer. FMN serves as cofactor.

It catalyses the reaction 2 a quinone + NADH + H(+) = 2 a 1,4-benzosemiquinone + NAD(+). The catalysed reaction is N,N-dimethyl-1,4-phenylenediamine + anthranilate + 2 NAD(+) = 2-(4-dimethylaminophenyl)diazenylbenzoate + 2 NADH + 2 H(+). In terms of biological role, quinone reductase that provides resistance to thiol-specific stress caused by electrophilic quinones. Its function is as follows. Also exhibits azoreductase activity. Catalyzes the reductive cleavage of the azo bond in aromatic azo compounds to the corresponding amines. This chain is FMN-dependent NADH:quinone oxidoreductase 1, found in Hahella chejuensis (strain KCTC 2396).